A 554-amino-acid chain; its full sequence is Glucose-6-phosphate isomerase (554 aa).

The Proton donor role is filled by Glu-359. Active-site residues include His-390 and Lys-518.

Belongs to the GPI family.

It localises to the cytoplasm. It catalyses the reaction alpha-D-glucose 6-phosphate = beta-D-fructose 6-phosphate. It participates in carbohydrate biosynthesis; gluconeogenesis. It functions in the pathway carbohydrate degradation; glycolysis; D-glyceraldehyde 3-phosphate and glycerone phosphate from D-glucose: step 2/4. Catalyzes the reversible isomerization of glucose-6-phosphate to fructose-6-phosphate. This is Glucose-6-phosphate isomerase from Pseudomonas fluorescens (strain SBW25).